The primary structure comprises 80 residues: Metallothionein-like protein 1 (80 aa).

Belongs to the metallothionein superfamily. Type 15 family.

Metallothioneins have a high content of cysteine residues that bind various heavy metals. This chain is Metallothionein-like protein 1 (METAL1), found in Coffea arabica (Arabian coffee).